The sequence spans 230 residues: uncharacterized protein (230 aa).

Helical transmembrane passes span 34-54 (FFAG…MNFQ), 56-76 (VVQY…GLMF), 87-107 (MLFA…GMVI), 111-131 (GLGA…LMSV), 146-166 (MLFI…FLGS), 167-187 (PMFQ…YIAY), and 205-225 (VSLY…IGIF).

It belongs to the BI1 family.

The protein localises to the cell membrane. This is an uncharacterized protein from Helicobacter pylori (strain J99 / ATCC 700824) (Campylobacter pylori J99).